Here is a 196-residue protein sequence, read N- to C-terminus: MVARGKRVVVRQLQTRARRRLPVVLATAPVRPQRKRRQRGRNNKPRGGNGFARRSSQVHEFVFSKDNLNGNSKGSITFGPSLSECKPLADGILKAYHEYNITNVELAYITEASSTSSGSIAYELDPHLKNTTIQSKINKFSITKSEKKKFSRKAINGQAWHDTSEDQFRILYEGNGDAKIAGSFRVTIKVLTQNPK.

Residues 27-55 are disordered; that stretch reads TAPVRPQRKRRQRGRNNKPRGGNGFARRS. Basic residues predominate over residues 32–44; sequence PQRKRRQRGRNNK.

Belongs to the luteoviruses capsid protein family.

Its subcellular location is the virion. Functionally, major capsid protein. This is Major capsid protein from Bean leafroll virus (BLRV).